The primary structure comprises 617 residues: Zinc metalloproteinase nas-36 (617 aa).

The N-terminal stretch at 1–22 is a signal peptide; that stretch reads MRLCHSIILFNSLISISICSKA. A propeptide spanning residues 23–126 is cleaved from the precursor; sequence DDPALLVASE…SKDKTKRLRR (104 aa). A Peptidase M12A domain is found at 127–322; the sequence is SFVSDKTATW…VATINTAYCK (196 aa). 9 disulfide bridges follow: Cys-169–Cys-321, Cys-192–Cys-211, Cys-325–Cys-346, Cys-348–Cys-357, Cys-368–Cys-397, Cys-425–Cys-445, Cys-519–Cys-550, Cys-523–Cys-555, and Cys-535–Cys-540. N-linked (GlcNAc...) asparagine glycosylation is present at Asn-174. His-219 contacts Zn(2+). Glu-220 is a catalytic residue. Zn(2+) contacts are provided by His-223 and His-229. The EGF-like domain maps to 317–358; the sequence is NTAYCKDECKSEKTKCENGGYMRPSKCSECLCPDGLGGEKCE. In terms of domain architecture, CUB spans 368 to 482; sequence CGGIIKLTEE…IGFKIQAKST (115 aa). A TSP type-1 domain is found at 507–556; that stretch reads PNVWADWGEWSMCSRTCGGCGIRSRVRSCRSKKCEGRRQEFGTCNLKACP.

Requires Zn(2+) as cofactor. In terms of tissue distribution, expressed in hypodermal cells. Also detected in the hypodermal seam cells in L4 larvae and young adults. In old adult hermaphrodites, it localizes to the vulva (at protein level).

It is found in the secreted. Metalloprotease. Involved in molting, a process during larval stages in which a new cuticle is formed and the old cuticle is shed. The protein is Zinc metalloproteinase nas-36 (nas-36) of Caenorhabditis elegans.